A 96-amino-acid chain; its full sequence is ATP-dependent Clp protease adapter protein ClpS (96 aa).

The protein belongs to the ClpS family. As to quaternary structure, binds to the N-terminal domain of the chaperone ClpA.

Involved in the modulation of the specificity of the ClpAP-mediated ATP-dependent protein degradation. This Campylobacter jejuni subsp. doylei (strain ATCC BAA-1458 / RM4099 / 269.97) protein is ATP-dependent Clp protease adapter protein ClpS.